The sequence spans 1081 residues: Cellulose synthase A catalytic subunit 1 [UDP-forming] (1081 aa).

M1 carries the post-translational modification N-acetylmethionine. At 1–270 (MEASAGLVAG…SRVVPIPSSR (270 aa)) the chain is on the cytoplasmic side. The Zn(2+) site is built by C39, C42, C58, C61, C66, C69, C81, and C84. The RING-type; degenerate zinc-finger motif lies at 39-85 (CQICGDDVGLAETGDVFVACNECAFPVCRPCYEYERKDGTQCCPQCK). The segment at 118–195 (GANKARHQRH…RQPVPVRIVD (78 aa)) is disordered. Residues 127 to 139 (HGEEFSSSSRHES) show a composition bias toward basic and acidic residues. The span at 158–168 (PDTQSVRTTSG) shows a compositional bias: polar residues. The chain crosses the membrane as a helical span at residues 271–291 (LTPYRVVIILRLIILCFFLQY). The Extracellular portion of the chain corresponds to 292-299 (RTTHPVKN). Residues 300–320 (AYPLWLTSVICEIWFAFSWLL) traverse the membrane as a helical segment. The Cytoplasmic portion of the chain corresponds to 321–856 (DQFPKWYPIN…LLERIAYINT (536 aa)). UDP-alpha-D-glucose is bound by residues S359, K365, E366, and D395. Residue D395 is part of the active site. Residues 449–476 (VKERRAMKREYEEFKVRINALVAKAQKI) are a coiled coil. A UDP-alpha-D-glucose-binding site is contributed by K536. Mn(2+) contacts are provided by K537 and D561. D780 is an active-site residue. A helical membrane pass occupies residues 857–877 (IVYPITSIPLIAYCILPAFCL). Residues 878 to 889 (ITDRFIIPEISN) are Extracellular-facing. The chain crosses the membrane as a helical span at residues 890 to 910 (YASIWFILLFISIAVTGILEL). Topologically, residues 911 to 925 (RWSGVSIEDWWRNEQ) are cytoplasmic. Residues 926–946 (FWVIGGTSAHLFAVFQGLLKV) form a helical membrane-spanning segment. Residues 947-976 (LAGIDTNFTVTSKATDEDGDFAELYIFKWT) lie on the Extracellular side of the membrane. N-linked (GlcNAc...) asparagine glycosylation occurs at N953. A helical membrane pass occupies residues 977-997 (ALLIPPTTVLLVNLIGIVAGV). Topologically, residues 998–1008 (SYAVNSGYQSW) are cytoplasmic. Residues 1009–1029 (GPLFGKLFFALWVIAHLYPFL) traverse the membrane as a helical segment. The Extracellular segment spans residues 1030–1038 (KGLLGRQNR). The helical transmembrane segment at 1039–1059 (TPTIVIVWSVLLASIFSLLWV) threads the bilayer. The Cytoplasmic segment spans residues 1060–1081 (RINPFVDANPNANNFNGKGGVF).

The protein belongs to the glycosyltransferase 2 family. Plant cellulose synthase subfamily. In terms of assembly, interacts with CESA3 and CESA6. Assembly with CESA3 and CESA6 is required for functional complex in primary cell wall cellulose synthesis. Interacts with STL1 and STL2, but not with GOT1. Binds to CSI1. Interacts with PAT24/TIP1. The cofactor is Zn(2+). Mn(2+) is required as a cofactor. Post-translationally, S-acylated. As to expression, expressed in germinating seeds, seedlings, roots, stems, shoots leaves and flowers, but not in mature flowers.

It is found in the cell membrane. The enzyme catalyses [(1-&gt;4)-beta-D-glucosyl](n) + UDP-alpha-D-glucose = [(1-&gt;4)-beta-D-glucosyl](n+1) + UDP + H(+). It participates in glycan metabolism; plant cellulose biosynthesis. Functionally, catalytic subunit of cellulose synthase terminal complexes ('rosettes'), required for beta-1,4-glucan microfibril crystallization, a major mechanism of the cell wall formation. Involved in the primary cell wall formation. Required during embryogenesis for cell elongation, orientation of cell expansion and complex cell wall formations, such as interdigitated pattern of epidermal pavement cells, stomatal guard cells and trichomes. Plays a role in lateral roots formation, but seems not necessary for the development of tip-growing cells such as root hairs. The presence of each protein CESA1 and CESA6 is critical for cell expansion after germination. This chain is Cellulose synthase A catalytic subunit 1 [UDP-forming], found in Arabidopsis thaliana (Mouse-ear cress).